The chain runs to 131 residues: Large ribosomal subunit protein bL12 (131 aa).

This sequence belongs to the bacterial ribosomal protein bL12 family. In terms of assembly, homodimer. Part of the ribosomal stalk of the 50S ribosomal subunit. Forms a multimeric L10(L12)X complex, where L10 forms an elongated spine to which 2 to 4 L12 dimers bind in a sequential fashion. Binds GTP-bound translation factors.

Its function is as follows. Forms part of the ribosomal stalk which helps the ribosome interact with GTP-bound translation factors. Is thus essential for accurate translation. This chain is Large ribosomal subunit protein bL12, found in Tropheryma whipplei (strain Twist) (Whipple's bacillus).